The chain runs to 223 residues: Deoxyribose-phosphate aldolase 2 (223 aa).

The active-site Proton donor/acceptor is Asp-89. Lys-152 acts as the Schiff-base intermediate with acetaldehyde in catalysis. The active-site Proton donor/acceptor is Lys-181.

The protein belongs to the DeoC/FbaB aldolase family. DeoC type 1 subfamily.

The protein localises to the cytoplasm. The enzyme catalyses 2-deoxy-D-ribose 5-phosphate = D-glyceraldehyde 3-phosphate + acetaldehyde. The protein operates within carbohydrate degradation; 2-deoxy-D-ribose 1-phosphate degradation; D-glyceraldehyde 3-phosphate and acetaldehyde from 2-deoxy-alpha-D-ribose 1-phosphate: step 2/2. Catalyzes a reversible aldol reaction between acetaldehyde and D-glyceraldehyde 3-phosphate to generate 2-deoxy-D-ribose 5-phosphate. The chain is Deoxyribose-phosphate aldolase 2 from Bacillus licheniformis (strain ATCC 14580 / DSM 13 / JCM 2505 / CCUG 7422 / NBRC 12200 / NCIMB 9375 / NCTC 10341 / NRRL NRS-1264 / Gibson 46).